Reading from the N-terminus, the 520-residue chain is Protein OS-9 homolog (520 aa).

A signal peptide spans 1 to 23; sequence MIRRIRTLTPLLVLACAGSGAWA. A compositionally biased stretch (polar residues) spans 121–135; sequence QVDNGNRDQTNGAES. Residues 121-144 form a disordered region; it reads QVDNGNRDQTNGAESTSKEDEQRE. The region spanning 161 to 302 is the MRH domain; it reads GKCMYYISGW…VIYTPRLCND (142 aa). Residues cysteine 163 and cysteine 176 are joined by a disulfide bond. A mannooligosaccharide derivative-binding residues include tryptophan 170, tryptophan 171, glutamine 183, aspartate 257, arginine 263, glutamate 284, and tyrosine 290. Disulfide bonds link cysteine 256–cysteine 288 and cysteine 271–cysteine 300. The tract at residues 442 to 520 is disordered; that stretch reads GLVGTVDSND…SEEIFFKDEL (79 aa). Polar residues predominate over residues 461–471; that stretch reads GSISQPAQGTT. A compositionally biased stretch (basic and acidic residues) spans 473–499; that stretch reads DKGESNAETGEEKKKADEKIDHYEPEK. A Prevents secretion from ER motif is present at residues 517–520; sequence KDEL.

It belongs to the OS-9 family. As to quaternary structure, interacts with missfolded ER lumenal proteins.

The protein localises to the endoplasmic reticulum membrane. Functionally, lectin involved in the quality control of the secretory pathway. As a member of the endoplasmic reticulum-associated degradation lumenal (ERAD-L) surveillance system, targets misfolded endoplasmic reticulum lumenal glycoproteins for degradation. The polypeptide is Protein OS-9 homolog (yos9) (Aspergillus fumigatus (strain ATCC MYA-4609 / CBS 101355 / FGSC A1100 / Af293) (Neosartorya fumigata)).